The following is a 202-amino-acid chain: Dephospho-CoA kinase (202 aa).

In terms of domain architecture, DPCK spans 4-201 (VIGLTGGIAS…QKYLAMSKQN (198 aa)). 12–17 (ASGKTT) lines the ATP pocket.

This sequence belongs to the CoaE family.

Its subcellular location is the cytoplasm. The enzyme catalyses 3'-dephospho-CoA + ATP = ADP + CoA + H(+). The protein operates within cofactor biosynthesis; coenzyme A biosynthesis; CoA from (R)-pantothenate: step 5/5. Its function is as follows. Catalyzes the phosphorylation of the 3'-hydroxyl group of dephosphocoenzyme A to form coenzyme A. The protein is Dephospho-CoA kinase of Vibrio vulnificus (strain YJ016).